Consider the following 180-residue polypeptide: Inorganic pyrophosphatase (180 aa).

The substrate site is built by Lys30, Arg44, and Tyr56. Asp66, Asp71, and Asp103 together coordinate Mg(2+). Tyr142 lines the substrate pocket.

This sequence belongs to the PPase family. Homohexamer. Mg(2+) serves as cofactor.

It localises to the cytoplasm. It carries out the reaction diphosphate + H2O = 2 phosphate + H(+). Functionally, catalyzes the hydrolysis of inorganic pyrophosphate (PPi) forming two phosphate ions. This chain is Inorganic pyrophosphatase, found in Buchnera aphidicola subsp. Schizaphis graminum (strain Sg).